A 465-amino-acid polypeptide reads, in one-letter code: Cysteine--tRNA ligase (465 aa).

Residue Cys27 coordinates Zn(2+). Positions 29–39 (PTVYDDAHLGH) match the 'HIGH' region motif. 3 residues coordinate Zn(2+): Cys207, His237, and Glu241. The 'KMSKS' region motif lies at 269–273 (KMSKS). ATP is bound at residue Lys272.

The protein belongs to the class-I aminoacyl-tRNA synthetase family. In terms of assembly, monomer. It depends on Zn(2+) as a cofactor.

It localises to the cytoplasm. It carries out the reaction tRNA(Cys) + L-cysteine + ATP = L-cysteinyl-tRNA(Cys) + AMP + diphosphate. The chain is Cysteine--tRNA ligase from Helicobacter acinonychis (strain Sheeba).